The primary structure comprises 431 residues: GDP-L-galactose phosphorylase 2 (431 aa).

His-235 serves as the catalytic Tele-GMP-histidine intermediate. Over residues 398–407 (EEEEEEELEE) the composition is skewed to acidic residues. The interval 398-417 (EEEEEEELEEQNSMNGGSFT) is disordered.

It belongs to the GDPGP1 family. In terms of assembly, interacts with TLP1. Expressed in leaves, stems, roots, flowers and siliques.

Its subcellular location is the cytoplasm. It localises to the nucleus. The catalysed reaction is GDP-beta-L-galactose + phosphate = beta-L-galactose 1-phosphate + GDP + H(+). It participates in cofactor biosynthesis; L-ascorbate biosynthesis via GDP-alpha-D-mannose pathway; L-ascorbate from GDP-alpha-D-mannose: step 2/5. Functionally, catalyzes a reaction of the Smirnoff-Wheeler pathway, the major route to ascorbate biosynthesis in plants. Acts as a phosphorylase rather than as a transferase. Uses preferentially GDP-L-galactose and GDP-D-glucose as substrates. Lower activity with GDP-L-fucose, very low activity with GDP-D-mannose, and no activity with UDP-D-glucose, UDP-D-galactose or ADP-D-glucose. Highly specific for inorganic phosphate as the guanylyl acceptor. This Arabidopsis thaliana (Mouse-ear cress) protein is GDP-L-galactose phosphorylase 2 (VTC5).